Consider the following 320-residue polypeptide: Cytochrome f (320 aa).

Residues 1 to 35 form the signal peptide; that stretch reads MQNRNTFSWVKDQMSRFISVSIMIYVITRTSISNA. Y36, C56, C59, and H60 together coordinate heme. Residues 286–306 form a helical membrane-spanning segment; that stretch reads VQGLLFFFASVILAQIFLVLK.

Belongs to the cytochrome f family. In terms of assembly, the 4 large subunits of the cytochrome b6-f complex are cytochrome b6, subunit IV (17 kDa polypeptide, petD), cytochrome f and the Rieske protein, while the 4 small subunits are PetG, PetL, PetM and PetN. The complex functions as a dimer. Heme is required as a cofactor.

It localises to the plastid. It is found in the chloroplast thylakoid membrane. Component of the cytochrome b6-f complex, which mediates electron transfer between photosystem II (PSII) and photosystem I (PSI), cyclic electron flow around PSI, and state transitions. The protein is Cytochrome f of Ceratophyllum demersum (Rigid hornwort).